Reading from the N-terminus, the 257-residue chain is Imidazole glycerol phosphate synthase subunit HisF (257 aa).

Residues D11 and D130 contribute to the active site.

This sequence belongs to the HisA/HisF family. Heterodimer of HisH and HisF.

It is found in the cytoplasm. It carries out the reaction 5-[(5-phospho-1-deoxy-D-ribulos-1-ylimino)methylamino]-1-(5-phospho-beta-D-ribosyl)imidazole-4-carboxamide + L-glutamine = D-erythro-1-(imidazol-4-yl)glycerol 3-phosphate + 5-amino-1-(5-phospho-beta-D-ribosyl)imidazole-4-carboxamide + L-glutamate + H(+). It functions in the pathway amino-acid biosynthesis; L-histidine biosynthesis; L-histidine from 5-phospho-alpha-D-ribose 1-diphosphate: step 5/9. IGPS catalyzes the conversion of PRFAR and glutamine to IGP, AICAR and glutamate. The HisF subunit catalyzes the cyclization activity that produces IGP and AICAR from PRFAR using the ammonia provided by the HisH subunit. The sequence is that of Imidazole glycerol phosphate synthase subunit HisF from Trichormus variabilis (strain ATCC 29413 / PCC 7937) (Anabaena variabilis).